The chain runs to 864 residues: Leucine--tRNA ligase (864 aa).

The 'HIGH' region signature appears at 42 to 52; the sequence is PYPSGKLHMGH. The 'KMSKS' region motif lies at 624–628; the sequence is KMSKS. ATP is bound at residue Lys627.

Belongs to the class-I aminoacyl-tRNA synthetase family.

It localises to the cytoplasm. The enzyme catalyses tRNA(Leu) + L-leucine + ATP = L-leucyl-tRNA(Leu) + AMP + diphosphate. The sequence is that of Leucine--tRNA ligase from Burkholderia thailandensis (strain ATCC 700388 / DSM 13276 / CCUG 48851 / CIP 106301 / E264).